The following is a 321-amino-acid chain: 2-oxoglutarate-dependent dioxygenase frbH (321 aa).

The interval 77-97 (SRNSDTHGYEPVATSTGAQDD) is disordered. The Fe2OG dioxygenase domain occupies 169–273 (ESLSTLSMFR…RFSIAYFLRA (105 aa)). Fe cation contacts are provided by H194, D196, and H251. Residue R264 participates in 2-oxoglutarate binding.

It belongs to the iron/ascorbate-dependent oxidoreductase family.

It participates in antifungal biosynthesis. 2-oxoglutarate-dependent dioxygenase; part of the gene cluster that mediates the biosynthesis of the antifungal antibiotic FR901469, an inhibitor of beta-1,3-glucansynthase, exerting antifungal activity against the pathogenes Candida albicans and Aspergillus fumigatus. FR901469 is a cyclic depsipeptide containing 12 amino acid residues and a fatty acid chain. The NRPS frbI contains 12 modules responsible for the formation of the depsipeptide backbone which is denoted as Acyl-Thr-Ala-Tyr-Val-4OHPro-Thr-Thr-3OHPro-threo3OHGln-Gly-Thr-Orn-OH (C71H116N14O23). The PKS frbB is probably involved in the production of the hydrocarbon chain, and the acyl-CoA ligase frbC might be involved in the transport of the chain to the peptide ptoduct of frbI. Because FR901469 contains 3 hydroxylated amino acid residues, the 3 oxygenases frbA, frbH, and frbJ might be participating in amino acid hydroxylation. As no thioesterase domains were detected in frbI or frbB, the thioesterases frbD and frbE may instead release and cyclize the products of the NRPS and PKS, respectively. The polypeptide is 2-oxoglutarate-dependent dioxygenase frbH (Dothideomycetidae sp. (strain 11243) (Fungal sp. (strain No.11243))).